The following is a 355-amino-acid chain: Nematocyst expressed protein 3 (355 aa).

Residues 1 to 18 (MKLTYILLIAVVGVAIEA) form the signal peptide. 3 ShKT domains span residues 50–89 (CKDV…CKLC), 107–134 (QPQQ…CQLC), and 140–182 (SGPV…CNTY). Intrachain disulfides connect C50-C89, C57-C82, C71-C86, C116-C131, C149-C175, and C158-C179. Residues 92–355 (KRSKKQSDYM…KKSKSHKKQH (264 aa)) constitute a propeptide that is removed on maturation. Positions 202–355 (YQPNAMPTPP…KKSKSHKKQH (154 aa)) are disordered. Positions 207 to 221 (MPTPPQGVTPAPLPP) are enriched in pro residues. Low complexity-rich tracts occupy residues 222-232 (YFQQQGYGYPQ), 240-270 (VQPG…TTTE), and 277-332 (TEAA…AQSD). Positions 335–355 (NKKKHKKDKAQKKSKSHKKQH) are enriched in basic residues.

The protein belongs to the NEP3 family. Nematocytes. In late planulae, transcripts are found throughout the ectoderm in nematocytes, with high concentration of expressing cells in the oral pole. In primary polyps, is expressed in nematocytes in the body wall and physa ectoderm and in the upper and lower pharynx.

It localises to the nematocyst. The protein resides in the secreted. Functionally, neurotoxin. In vivo, induces pronounced contraction and tail twitching on zebrafish larvae, as well as death 5 hours later. The protein is Nematocyst expressed protein 3 of Nematostella vectensis (Starlet sea anemone).